Consider the following 259-residue polypeptide: MLIVVSPAKTLDYESPLATDLSTQPDFIADSEELIHVCRKLTPLDISSLMKVSDKIASLNAIRFEEWSPIFTSDNSRQALFAFKGDVYTGLDAASFSDDDFDYAQRHLRMLSGLYGLLKPLDLMQPYRLEMGTKLANDRGANLYQFWGNKITEKLNAAIEEQGDKTLINLASNEYFKAVKPALLNADVITPIFKDCKNGQYKIISFYAKKARGLMARFIIENRIATIEELKRFAVDGYYFVSAESSEKELMFKREEQFK.

It belongs to the UPF0246 family.

This is UPF0246 protein VSAL_I2547 from Aliivibrio salmonicida (strain LFI1238) (Vibrio salmonicida (strain LFI1238)).